The chain runs to 63 residues: MKTSVFVLVLGLVLLFAVSFATEMEESARECGKFMWKCKNSNDCCKDLVCSSRWKWCVLASPF.

The signal sequence occupies residues M1–A21. A propeptide spanning residues T22–R29 is cleaved from the precursor. 3 disulfide bridges follow: C31-C45, C38-C50, and C44-C57.

Belongs to the neurotoxin 10 (Hwtx-1) family. 63 (VsTx1) subfamily. Expressed by the venom gland.

Its subcellular location is the secreted. In terms of biological role, inhibits sodium channels Nav1.7/SCN9A and potassium channels Kv11.1/KCNH2. Also binds the voltage-sensor domain of the potassium channel KvAP (from the archaeon Aeropyrum pernix) with very slow apparent binding kinetics and affects channel gating. Reaches its target by dynamically partitioning into anionic or zwitterionic headgroup lipid membranes. May bind to the open state of KvAP. The polypeptide is Kappa-theraphotoxin-Gr3a (Grammostola rosea (Chilean rose tarantula)).